A 557-amino-acid polypeptide reads, in one-letter code: Alpha-barbatene synthase (557 aa).

The (2E,6E)-farnesyl diphosphate site is built by R273, D310, D314, R451, and D454. Mg(2+) contacts are provided by D310 and D314. A DDXXD motif motif is present at residues 310 to 314; that stretch reads DDACD. Mg(2+) is bound by residues D454, D455, and D462.

This sequence belongs to the terpene synthase family. Tpsa subfamily. As to quaternary structure, monomer. It depends on Mg(2+) as a cofactor. Requires Mn(2+) as cofactor. Expressed exclusively in flowers. Expressed in intrafloral nectaries and in the funiculus within the ovules.

Its subcellular location is the cytoplasm. It carries out the reaction (2E,6E)-farnesyl diphosphate = (+)-alpha-barbatene + diphosphate. It catalyses the reaction (2E,6E)-farnesyl diphosphate = (+)-thujopsene + diphosphate. The catalysed reaction is (2E,6E)-farnesyl diphosphate = (+)-beta-chamigrene + diphosphate. The enzyme catalyses (2E,6E)-farnesyl diphosphate = (+)-beta-barbatene + diphosphate. It carries out the reaction (2E,6E)-farnesyl diphosphate = beta-sesquiphellandrene + diphosphate. It catalyses the reaction (2E,6E)-farnesyl diphosphate = (S)-beta-bisabolene + diphosphate. The catalysed reaction is (2E,6E)-farnesyl diphosphate = (-)-alpha-cuprenene + diphosphate. The enzyme catalyses (2E,6E)-farnesyl diphosphate = alpha-zingiberene + diphosphate. It carries out the reaction (2E,6E)-farnesyl diphosphate = beta-acoradiene + diphosphate. It catalyses the reaction (2E,6E)-farnesyl diphosphate = (E)-beta-farnesene + diphosphate. The protein operates within secondary metabolite biosynthesis; terpenoid biosynthesis. Functionally, involved in the biosynthesis of over 15 sesquiterpenes (C15). The major products are (+)-alpha-barbatene (27.3%), (+)-thujopsene (17.8%) and (+)-beta-chamigrene (9.9%). Can use farnesyl diphosphate or geranyl diphosphate as substrates, but not geranylgeranyl diphosphate. This chain is Alpha-barbatene synthase, found in Arabidopsis thaliana (Mouse-ear cress).